Consider the following 1034-residue polypeptide: Beta-galactosidase (1034 aa).

The active-site Proton donor is Glu-481. Glu-547 (nucleophile) is an active-site residue.

It belongs to the glycosyl hydrolase 2 family.

The catalysed reaction is Hydrolysis of terminal non-reducing beta-D-galactose residues in beta-D-galactosides.. This is Beta-galactosidase (bgaM) from Priestia megaterium (strain DSM 319 / IMG 1521) (Bacillus megaterium).